We begin with the raw amino-acid sequence, 392 residues long: Riboflavin biosynthesis protein PYRD, chloroplastic (392 aa).

The transit peptide at 1–26 (MASSLVSRPHLTQRPVRAATLASATR) directs the protein to the chloroplast. Positions 46-168 (LDDAHYMRRC…KLQGAGISVR (123 aa)) constitute a CMP/dCMP-type deaminase domain. Residue His95 coordinates Zn(2+). The active-site Proton donor is Glu97. Zn(2+) is bound by residues Cys120 and Cys129.

Zn(2+) serves as cofactor.

It localises to the plastid. It is found in the chloroplast. It carries out the reaction 2,5-diamino-6-hydroxy-4-(5-phosphoribosylamino)-pyrimidine + H2O + H(+) = 5-amino-6-(5-phospho-D-ribosylamino)uracil + NH4(+). The protein operates within cofactor biosynthesis; riboflavin biosynthesis; 5-amino-6-(D-ribitylamino)uracil from GTP: step 2/4. Its function is as follows. Monofunctional pyrimidine deaminase involved in the riboflavin biosynthesis pathway. Also has a reductase domain that lacks catalytically essential substrate-binding residues. This is Riboflavin biosynthesis protein PYRD, chloroplastic (PYRD) from Zea mays (Maize).